Reading from the N-terminus, the 254-residue chain is tRNA (guanine-N(7)-)-methyltransferase (254 aa).

S-adenosyl-L-methionine contacts are provided by glutamate 82, glutamate 107, aspartate 134, and aspartate 157. Residue aspartate 157 is part of the active site. Substrate-binding positions include lysine 161, aspartate 193, and 233–236 (TKFE).

It belongs to the class I-like SAM-binding methyltransferase superfamily. TrmB family.

It carries out the reaction guanosine(46) in tRNA + S-adenosyl-L-methionine = N(7)-methylguanosine(46) in tRNA + S-adenosyl-L-homocysteine. The protein operates within tRNA modification; N(7)-methylguanine-tRNA biosynthesis. Its function is as follows. Catalyzes the formation of N(7)-methylguanine at position 46 (m7G46) in tRNA. This Corynebacterium jeikeium (strain K411) protein is tRNA (guanine-N(7)-)-methyltransferase.